A 243-amino-acid polypeptide reads, in one-letter code: Probable transcriptional regulatory protein BAV2207 (243 aa).

The tract at residues 1–21 is disordered; sequence MAGHSKWANIQHRKGRQDAKR.

Belongs to the TACO1 family.

Its subcellular location is the cytoplasm. The polypeptide is Probable transcriptional regulatory protein BAV2207 (Bordetella avium (strain 197N)).